The sequence spans 386 residues: Acetylornithine aminotransferase (386 aa).

Pyridoxal 5'-phosphate contacts are provided by residues 94-95 (GT) and Phe-121. Arg-124 contributes to the N(2)-acetyl-L-ornithine binding site. Pyridoxal 5'-phosphate is bound at residue 206–209 (DEVQ). Residue Lys-235 is modified to N6-(pyridoxal phosphate)lysine. Residue Ser-263 participates in N(2)-acetyl-L-ornithine binding. Thr-264 serves as a coordination point for pyridoxal 5'-phosphate.

Belongs to the class-III pyridoxal-phosphate-dependent aminotransferase family. ArgD subfamily. Homodimer. Requires pyridoxal 5'-phosphate as cofactor.

It is found in the cytoplasm. It carries out the reaction N(2)-acetyl-L-ornithine + 2-oxoglutarate = N-acetyl-L-glutamate 5-semialdehyde + L-glutamate. It participates in amino-acid biosynthesis; L-arginine biosynthesis; N(2)-acetyl-L-ornithine from L-glutamate: step 4/4. The chain is Acetylornithine aminotransferase from Listeria monocytogenes serotype 4b (strain F2365).